The primary structure comprises 718 residues: Polyribonucleotide nucleotidyltransferase (718 aa).

Asp-487 and Asp-493 together coordinate Mg(2+). The 60-residue stretch at 554–613 (PRIETFKIPTDKIREVIGTGGKVIREIVEKTGAKVNIEDDGTVKVASSDGESIKAAIKWI) folds into the KH domain. In terms of domain architecture, S1 motif spans 623–691 (GEIYEGTVVK…DRGKTRLSMR (69 aa)). The interval 694–718 (DQETGEDLEAKQKAEGEAPAQATGE) is disordered.

It belongs to the polyribonucleotide nucleotidyltransferase family. Mg(2+) serves as cofactor.

The protein localises to the cytoplasm. It carries out the reaction RNA(n+1) + phosphate = RNA(n) + a ribonucleoside 5'-diphosphate. Its function is as follows. Involved in mRNA degradation. Catalyzes the phosphorolysis of single-stranded polyribonucleotides processively in the 3'- to 5'-direction. This is Polyribonucleotide nucleotidyltransferase from Rhodopseudomonas palustris (strain HaA2).